Reading from the N-terminus, the 101-residue chain is Small ribosomal subunit protein bS18c (101 aa).

Residues 82 to 101 (KQFERAESTPRTPGPRTRNK) are disordered.

It belongs to the bacterial ribosomal protein bS18 family. In terms of assembly, part of the 30S ribosomal subunit.

It is found in the plastid. The protein localises to the chloroplast. The sequence is that of Small ribosomal subunit protein bS18c from Platanus occidentalis (Sycamore).